The sequence spans 372 residues: Protein zntB (372 aa).

3 helical membrane-spanning segments follow: residues 15–35 (LIMCFLSGLSTAIGGLYVIFI), 42–62 (LLGHLLSFSSGVMIYISFMDL), and 70–90 (IGFYNANIWFFVGIIFFAVIL). Positions 99–166 (ESGDSNHAHS…IAKSKNKKKS (68 aa)) are disordered. A compositionally biased stretch (basic and acidic residues) spans 114–124 (IEKHSSEKKEV). Residues 133 to 167 (NGKDKKQKQQKQKQQKQQQQQKQNIAKSKNKKKSK) are a coiled coil. A compositionally biased stretch (basic residues) spans 137 to 146 (KKQKQQKQKQ). The segment covering 147–159 (QKQQQQQKQNIAK) has biased composition (low complexity). The next 5 helical transmembrane spans lie at 170–192 (YLNSVGIATAIGVSLHNFPEGVA), 207–229 (LMLAIAAHNIPEGMAVAAPIFSA), 237–257 (FKYCLYSGLCEPVGAIIFGLI), 271–291 (LAAVAGIMVFMVIKELLPAAF), and 301–321 (FSNIIGMIFFFFSIHFLHSML). Residues 328–372 (AGDGGHGHSHGGHGHSHGHGHSHGGHSHDSQHVESPQSSSFNAFA) are disordered. A compositionally biased stretch (basic residues) spans 334 to 352 (GHSHGGHGHSHGHGHSHGG). A compositionally biased stretch (polar residues) spans 360–372 (VESPQSSSFNAFA).

It belongs to the ZIP transporter (TC 2.A.5) family. ZupT subfamily.

The protein resides in the membrane. In terms of biological role, may transport divalent cations. May participate, with dstA, in the regulation of the differentiation of stalk cells during development. This Dictyostelium discoideum (Social amoeba) protein is Protein zntB (zntB).